The chain runs to 282 residues: Putative phosphite transport system permease protein HtxC (282 aa).

The next 4 helical transmembrane spans lie at 23-43 (HFATSVVVLSLLAVAWYVCQI), 81-101 (LAMATIGTIFATIIAFPLALM), 130-150 (VYALVFVAAVGFGPFSGVLAI), and 239-259 (FNKMITVLAVVLLMVSAIDFI). An ABC transmembrane type-1 domain is found at 77-260 (AGETLAMATI…LMVSAIDFIS (184 aa)).

It belongs to the binding-protein-dependent transport system permease family.

It localises to the cell inner membrane. Its function is as follows. Probably forms part of a binding-protein-dependent hypophosphite transporter. This is Putative phosphite transport system permease protein HtxC (htxC) from Stutzerimonas stutzeri (Pseudomonas stutzeri).